The following is a 91-amino-acid chain: UPF0512 protein F (91 aa).

It belongs to the UPF0512 family.

This Dictyostelium discoideum (Social amoeba) protein is UPF0512 protein F.